The sequence spans 295 residues: Cyclin-G1 (295 aa).

Belongs to the cyclin family. Cyclin G subfamily.

The protein resides in the nucleus. Functionally, may play a role in growth regulation. Is associated with G2/M phase arrest in response to DNA damage. May be an intermediate by which p53 mediates its role as an inhibitor of cellular proliferation. This is Cyclin-G1 (CCNG1) from Pongo abelii (Sumatran orangutan).